We begin with the raw amino-acid sequence, 263 residues long: HTH-type transcriptional repressor NanR (263 aa).

The interval 1–22 (MGLMNAFDSQTEDSSPAIGRNL) is disordered. Positions 30–98 (KKLSEMVEEE…NGERARVSRP (69 aa)) constitute an HTH gntR-type domain. The segment at residues 58 to 77 (ERELMAFFNVGRPSVREALA) is a DNA-binding region (H-T-H motif).

The protein belongs to the NanR family.

Transcriptional repressor that controls expression of the genes required for the catabolism of sialic acids. The polypeptide is HTH-type transcriptional repressor NanR (Shigella sonnei (strain Ss046)).